The sequence spans 354 residues: Zinc finger protein-like 1 homolog (354 aa).

The segment at 1–41 adopts a B box-type; degenerate zinc-finger fold; it reads MGICKCKKRSEDFCFNHKKFICDSCVVADHSICYIKSYVSW. The RING-type; atypical zinc finger occupies 52–103; the sequence is CGVCKGKFDVDDNDDSVRLLCYHLYHPECIDVYVAALPQNSSVESYPCPKCP. Disordered regions lie at residues 139-167 and 187-225; these read KQNS…NGTH and GIHH…PYGL. Over residues 196 to 205 the composition is skewed to low complexity; the sequence is NNSNNNNIIN. The chain crosses the membrane as a helical span at residues 287–307; sequence YLIMITVAIIVFLILISKMGS. The tract at residues 326 to 354 is disordered; that stretch reads ININNDNNGGNGAINEETLNDQKIPNNGQ.

This sequence belongs to the ZFPL1 family.

Its subcellular location is the membrane. The sequence is that of Zinc finger protein-like 1 homolog (zfpl1) from Dictyostelium discoideum (Social amoeba).